A 344-amino-acid polypeptide reads, in one-letter code: Putative esterase NocK (344 aa).

Positions 1–34 (MIGVTRRSGLALAVLVSSAACAGAEPVAPPPAPA) form a signal peptide, tat-type signal. A disordered region spans residues 265–295 (GGADERRREEARPAAAPGGTSTSRETCANPD). The span at 266–276 (GADERRREEAR) shows a compositional bias: basic and acidic residues.

This sequence belongs to the AB hydrolase superfamily. Predicted to be exported by the Tat system. The position of the signal peptide cleavage has not been experimentally proven.

The protein is Putative esterase NocK of Nocardia uniformis subsp. tsuyamanensis.